Consider the following 219-residue polypeptide: Redox-sensing transcriptional repressor Rex (219 aa).

Residues 17 to 56 (LYYRIFKRFHRENIVKTSSKQIAEAIGIDPATVRRDFSYF) constitute a DNA-binding region (H-T-H motif). 91 to 96 (GVGNIG) is an NAD(+) binding site.

It belongs to the transcriptional regulatory Rex family. As to quaternary structure, homodimer.

The protein localises to the cytoplasm. Functionally, modulates transcription in response to changes in cellular NADH/NAD(+) redox state. The protein is Redox-sensing transcriptional repressor Rex of Streptococcus thermophilus (strain ATCC BAA-491 / LMD-9).